We begin with the raw amino-acid sequence, 222 residues long: Large ribosomal subunit protein bL20 (222 aa).

This sequence belongs to the bacterial ribosomal protein bL20 family.

Its function is as follows. Binds directly to 23S ribosomal RNA and is necessary for the in vitro assembly process of the 50S ribosomal subunit. It is not involved in the protein synthesizing functions of that subunit. The protein is Large ribosomal subunit protein bL20 (rplT) of Paenarthrobacter aurescens (strain TC1).